The following is a 443-amino-acid chain: NADH-ubiquinone oxidoreductase chain 4 (443 aa).

Helical transmembrane passes span 1–21 (MFISVLLILFALCVTLIPEAH), 27–47 (VWSFVATIIPMWVVTWMWWNF), 71–91 (GVALSLMLLTTVLFPICMMLL), 93–113 (TVAGFMTFILLEVLVLSALCV), 114–134 (LDLLGFYILFEASLILLFLLI), 148–168 (IVLYTMAGSLVLLPTLFMIYS), 187–207 (VLGWGLLAVLAVKIPLMPVHL), 217–237 (PTAGSVLLAGVLLKLGGIGFL), 247–267 (FCVSVFPLVSTLCLVSFLFST), 279–299 (IVAYSSIAHMSMVTLAIFSQS), 308–328 (FLMIAHGLISPALFLIVGILY), 335–355 (FILYFSGLGASMPIGSTLFFL), 362–382 (AFPLFPNFIAEVLCMVSIFAV), 385–405 (LLAYVFCVCQVLGAAYGFWAF), and 423–443 (EFHTVLPLLIGAVWLGIKPMA).

It belongs to the complex I subunit 4 family.

The protein localises to the mitochondrion membrane. It carries out the reaction a ubiquinone + NADH + 5 H(+)(in) = a ubiquinol + NAD(+) + 4 H(+)(out). Functionally, core subunit of the mitochondrial membrane respiratory chain NADH dehydrogenase (Complex I) that is believed to belong to the minimal assembly required for catalysis. Complex I functions in the transfer of electrons from NADH to the respiratory chain. The immediate electron acceptor for the enzyme is believed to be ubiquinone. The sequence is that of NADH-ubiquinone oxidoreductase chain 4 (ND4) from Chlamydomonas reinhardtii (Chlamydomonas smithii).